The chain runs to 273 residues: Dermonecrotic toxin LspaSicTox-alphaIA2iii (273 aa).

His-5 is a catalytic residue. Mg(2+) contacts are provided by Glu-25 and Asp-27. Catalysis depends on His-41, which acts as the Nucleophile. Disulfide bonds link Cys-45–Cys-51 and Cys-47–Cys-190. Asp-85 contributes to the Mg(2+) binding site.

This sequence belongs to the arthropod phospholipase D family. Class II subfamily. Mg(2+) is required as a cofactor. In terms of tissue distribution, expressed by the venom gland.

Its subcellular location is the secreted. It carries out the reaction an N-(acyl)-sphingosylphosphocholine = an N-(acyl)-sphingosyl-1,3-cyclic phosphate + choline. The enzyme catalyses an N-(acyl)-sphingosylphosphoethanolamine = an N-(acyl)-sphingosyl-1,3-cyclic phosphate + ethanolamine. The catalysed reaction is a 1-acyl-sn-glycero-3-phosphocholine = a 1-acyl-sn-glycero-2,3-cyclic phosphate + choline. It catalyses the reaction a 1-acyl-sn-glycero-3-phosphoethanolamine = a 1-acyl-sn-glycero-2,3-cyclic phosphate + ethanolamine. Its function is as follows. Dermonecrotic toxins cleave the phosphodiester linkage between the phosphate and headgroup of certain phospholipids (sphingolipid and lysolipid substrates), forming an alcohol (often choline) and a cyclic phosphate. This toxin acts on sphingomyelin (SM). It may also act on ceramide phosphoethanolamine (CPE), lysophosphatidylcholine (LPC) and lysophosphatidylethanolamine (LPE), but not on lysophosphatidylserine (LPS), and lysophosphatidylglycerol (LPG). It acts by transphosphatidylation, releasing exclusively cyclic phosphate products as second products. Induces dermonecrosis, hemolysis, increased vascular permeability, edema, inflammatory response, and platelet aggregation. This chain is Dermonecrotic toxin LspaSicTox-alphaIA2iii, found in Loxosceles spadicea (Recluse spider).